Reading from the N-terminus, the 368-residue chain is NAD(P)H-quinone oxidoreductase subunit 1, chloroplastic (368 aa).

Transmembrane regions (helical) follow at residues 27 to 47, 97 to 117, 130 to 150, 166 to 186, 204 to 224, 249 to 269, 270 to 290, 305 to 325, and 348 to 368; these read FLWI…GVLV, WLFN…YLVI, IGVF…LMAG, AAQS…IALL, FLSW…IASL, YSGM…LVSS, LFVT…FSLF, VISI…FLFI, and FLLP…LFLL.

It belongs to the complex I subunit 1 family. In terms of assembly, NDH is composed of at least 16 different subunits, 5 of which are encoded in the nucleus.

Its subcellular location is the plastid. The protein localises to the chloroplast thylakoid membrane. It catalyses the reaction a plastoquinone + NADH + (n+1) H(+)(in) = a plastoquinol + NAD(+) + n H(+)(out). The enzyme catalyses a plastoquinone + NADPH + (n+1) H(+)(in) = a plastoquinol + NADP(+) + n H(+)(out). NDH shuttles electrons from NAD(P)H:plastoquinone, via FMN and iron-sulfur (Fe-S) centers, to quinones in the photosynthetic chain and possibly in a chloroplast respiratory chain. The immediate electron acceptor for the enzyme in this species is believed to be plastoquinone. Couples the redox reaction to proton translocation, and thus conserves the redox energy in a proton gradient. This Marchantia polymorpha (Common liverwort) protein is NAD(P)H-quinone oxidoreductase subunit 1, chloroplastic.